The chain runs to 39 residues: Glutenin, high molecular weight subunit PC237 (39 aa).

Belongs to the gliadin/glutenin family. As to quaternary structure, disulfide-bridge linked aggregates.

Functionally, glutenins are high-molecular weight seed storage proteins of wheat endosperm. Thought to be responsible for the visco-elastic property of wheat dough. The polypeptide is Glutenin, high molecular weight subunit PC237 (Triticum aestivum (Wheat)).